The sequence spans 454 residues: CCA-adding enzyme (454 aa).

ATP-binding residues include Ser-59 and Arg-62. CTP contacts are provided by Ser-59 and Arg-62. Positions 71, 73, and 125 each coordinate Mg(2+). The ATP site is built by His-148, Lys-167, and Tyr-176. Residues His-148, Lys-167, and Tyr-176 each contribute to the CTP site.

Belongs to the tRNA nucleotidyltransferase/poly(A) polymerase family. Archaeal CCA-adding enzyme subfamily. In terms of assembly, homodimer. Requires Mg(2+) as cofactor.

It carries out the reaction a tRNA precursor + 2 CTP + ATP = a tRNA with a 3' CCA end + 3 diphosphate. It catalyses the reaction a tRNA with a 3' CCA end + 2 CTP + ATP = a tRNA with a 3' CCACCA end + 3 diphosphate. In terms of biological role, catalyzes the addition and repair of the essential 3'-terminal CCA sequence in tRNAs without using a nucleic acid template. Adds these three nucleotides in the order of C, C, and A to the tRNA nucleotide-73, using CTP and ATP as substrates and producing inorganic pyrophosphate. tRNA 3'-terminal CCA addition is required both for tRNA processing and repair. Also involved in tRNA surveillance by mediating tandem CCA addition to generate a CCACCA at the 3' terminus of unstable tRNAs. While stable tRNAs receive only 3'-terminal CCA, unstable tRNAs are marked with CCACCA and rapidly degraded. In Methanosarcina acetivorans (strain ATCC 35395 / DSM 2834 / JCM 12185 / C2A), this protein is CCA-adding enzyme.